A 329-amino-acid chain; its full sequence is Intradiol ring-cleavage dioxygenase hqdA (329 aa).

Positions 167, 201, 225, and 227 each coordinate Fe cation.

This sequence belongs to the intradiol ring-cleavage dioxygenase family. In terms of assembly, homodimer. Requires Fe(3+) as cofactor.

It carries out the reaction catechol + O2 = cis,cis-muconate + 2 H(+). It catalyses the reaction benzene-1,2,4-triol + O2 = maleylacetate + 2 H(+). Its function is as follows. Intradiol ring-cleavage dioxygenase involved in an alternative pathway to the protocatechuic acid pathway since it is active on hydroxyquinol and catechol but not on protocatechuic acid. The chain is Intradiol ring-cleavage dioxygenase hqdA from Aspergillus niger (strain ATCC MYA-4892 / CBS 513.88 / FGSC A1513).